We begin with the raw amino-acid sequence, 1692 residues long: Protein TOPAZ1 (1692 aa).

Disordered stretches follow at residues 1-135 (MRRP…PGLD), 600-629 (ELSR…TGNK), and 894-919 (EPNV…EPSD). Residues 31–40 (GAAGGCGPEA) are compositionally biased toward gly residues. Positions 95–116 (SDPRGLEAAKEAELPLQTERHT) are enriched in basic and acidic residues. Residues 608–627 (VISNTTEDTQLTSETQSLTG) show a composition bias toward polar residues. Residues 902-919 (QSTDSKYMETPVKKEPSD) show a composition bias toward basic and acidic residues.

It is found in the cytoplasm. The protein resides in the cytosol. Its function is as follows. Important for normal spermatogenesis and male fertility. Specifically required for progression to the post-meiotic stages of spermatocyte development. Seems to be necessary for normal expression levels of a number of testis-expressed gene transcripts, although its role in this process is unclear. The protein is Protein TOPAZ1 (TOPAZ1) of Homo sapiens (Human).